A 246-amino-acid chain; its full sequence is Pyridoxine 5'-phosphate synthase (246 aa).

N6 is a binding site for 3-amino-2-oxopropyl phosphate. A 1-deoxy-D-xylulose 5-phosphate-binding site is contributed by 8-9 (DH). R17 contacts 3-amino-2-oxopropyl phosphate. The Proton acceptor role is filled by H49. R51 and H56 together coordinate 1-deoxy-D-xylulose 5-phosphate. The Proton acceptor role is filled by E76. T106 serves as a coordination point for 1-deoxy-D-xylulose 5-phosphate. The active-site Proton donor is the H196. 3-amino-2-oxopropyl phosphate-binding positions include G197 and 219-220 (GH).

Belongs to the PNP synthase family. In terms of assembly, homooctamer; tetramer of dimers.

The protein localises to the cytoplasm. The enzyme catalyses 3-amino-2-oxopropyl phosphate + 1-deoxy-D-xylulose 5-phosphate = pyridoxine 5'-phosphate + phosphate + 2 H2O + H(+). It participates in cofactor biosynthesis; pyridoxine 5'-phosphate biosynthesis; pyridoxine 5'-phosphate from D-erythrose 4-phosphate: step 5/5. Its function is as follows. Catalyzes the complicated ring closure reaction between the two acyclic compounds 1-deoxy-D-xylulose-5-phosphate (DXP) and 3-amino-2-oxopropyl phosphate (1-amino-acetone-3-phosphate or AAP) to form pyridoxine 5'-phosphate (PNP) and inorganic phosphate. This is Pyridoxine 5'-phosphate synthase from Akkermansia muciniphila (strain ATCC BAA-835 / DSM 22959 / JCM 33894 / BCRC 81048 / CCUG 64013 / CIP 107961 / Muc).